A 644-amino-acid chain; its full sequence is Protein lin-9 (644 aa).

A disordered region spans residues 1–77 (MSSAVRSPRK…GRDSPSVNSL (77 aa)). Basic residues predominate over residues 50-62 (SIKRTGSPKKSPA).

This sequence belongs to the lin-9 family. In terms of assembly, component of the DRM complex, at least composed of lin-9, lin-35, lin-37, lin-52, lin-53, lin-54- dpl-1 and efl-1. Interacts with zft-11; the interaction is required to suppress the activation of non-neuronal genes in neurons.

Its subcellular location is the nucleus. In terms of biological role, synthetic multivulva class B (synMuvB) protein. SynMuvB proteins are required to repress the induction of vulval development by Ras signaling and probably act by forming the multiprotein DRM complex that represses transcription. Required for the development of sheath cells in the hermaphrodite gonad and for the development of the male spicule, rays and gonad. In association with the zinc finger protein ztf-11, negatively regulates the expression of non-neuronal genes during neurogenesis. The chain is Protein lin-9 from Caenorhabditis elegans.